We begin with the raw amino-acid sequence, 461 residues long: Fumarate hydratase class II (461 aa).

Residues 97-99 (SGT), 127-130 (HPND), 137-139 (SSN), and Thr-185 each bind substrate. The Proton donor/acceptor role is filled by His-186. Ser-316 is an active-site residue. Residues Ser-317 and 322-324 (KVN) contribute to the substrate site.

This sequence belongs to the class-II fumarase/aspartase family. Fumarase subfamily. As to quaternary structure, homotetramer.

The protein resides in the cytoplasm. It carries out the reaction (S)-malate = fumarate + H2O. It participates in carbohydrate metabolism; tricarboxylic acid cycle; (S)-malate from fumarate: step 1/1. Its function is as follows. Involved in the TCA cycle. Catalyzes the stereospecific interconversion of fumarate to L-malate. This Staphylococcus epidermidis (strain ATCC 35984 / DSM 28319 / BCRC 17069 / CCUG 31568 / BM 3577 / RP62A) protein is Fumarate hydratase class II.